The chain runs to 203 residues: Outer-membrane lipoprotein LolB (203 aa).

The first 18 residues, 1–18 (MYRLLCLLALLTAAGLMG), serve as a signal peptide directing secretion. A lipid anchor (N-palmitoyl cysteine) is attached at Cys19. Cys19 carries S-diacylglycerol cysteine lipidation.

The protein belongs to the LolB family. Monomer.

The protein resides in the cell outer membrane. In terms of biological role, plays a critical role in the incorporation of lipoproteins in the outer membrane after they are released by the LolA protein. The polypeptide is Outer-membrane lipoprotein LolB (Cellvibrio japonicus (strain Ueda107) (Pseudomonas fluorescens subsp. cellulosa)).